We begin with the raw amino-acid sequence, 301 residues long: MKIAILSRNQNLYSTKRLKEAGESLGHEVDVIDTLHCYMDISSNRPAVRFKGEALPYYDAIIPRIGASVTFYGTAVVRQFEMMGTFSINESVAISRSRDKLRSMQLLSRKGIGMPRTGFARQPDRIDDLIKNVGGAPVVIKLLEGTQGIGVVLADTQKAAESIIEAFMGLNANILVQEYIKEAGGADIRCLVVGGKVVAAMKRQAAAGEFRSNLHRGGSASLVRLSPQERKTAIDAAKTMGLNMCGVDILRSNNGPVVMEVNSSPGLEGIETATGKDVASMIIEFIVKNAKPNNTKTRGKG.

The ATP-grasp domain occupies 104-287 (MQLLSRKGIG…VASMIIEFIV (184 aa)). Residues lysine 141, 178-179 (EY), aspartate 187, and 211-213 (RSN) each bind ATP. Mg(2+) contacts are provided by aspartate 248, glutamate 260, and asparagine 262. Mn(2+)-binding residues include aspartate 248, glutamate 260, and asparagine 262.

Belongs to the RimK family. Mg(2+) is required as a cofactor. It depends on Mn(2+) as a cofactor.

The protein is Probable alpha-L-glutamate ligase 2 of Pseudoalteromonas atlantica (strain T6c / ATCC BAA-1087).